Here is a 349-residue protein sequence, read N- to C-terminus: Holliday junction branch migration complex subunit RuvB (349 aa).

Positions 1–181 are large ATPase domain (RuvB-L); sequence MDDRILTSVN…FGVLCPMEFY (181 aa). ATP contacts are provided by residues leucine 20, arginine 21, glycine 62, lysine 65, threonine 66, threonine 67, 128 to 130, arginine 171, tyrosine 181, and arginine 218; that span reads EDY. Threonine 66 provides a ligand contact to Mg(2+). The segment at 182–252 is small ATPAse domain (RuvB-S); the sequence is NDEELKEIIV…SAKKALNLLE (71 aa). Positions 255 to 349 are head domain (RuvB-H); that stretch reads DEGFDSIDNK…DQCSFFKKEK (95 aa). DNA-binding residues include arginine 310 and arginine 315.

This sequence belongs to the RuvB family. In terms of assembly, homohexamer. Forms an RuvA(8)-RuvB(12)-Holliday junction (HJ) complex. HJ DNA is sandwiched between 2 RuvA tetramers; dsDNA enters through RuvA and exits via RuvB. An RuvB hexamer assembles on each DNA strand where it exits the tetramer. Each RuvB hexamer is contacted by two RuvA subunits (via domain III) on 2 adjacent RuvB subunits; this complex drives branch migration. In the full resolvosome a probable DNA-RuvA(4)-RuvB(12)-RuvC(2) complex forms which resolves the HJ.

It is found in the cytoplasm. The catalysed reaction is ATP + H2O = ADP + phosphate + H(+). In terms of biological role, the RuvA-RuvB-RuvC complex processes Holliday junction (HJ) DNA during genetic recombination and DNA repair, while the RuvA-RuvB complex plays an important role in the rescue of blocked DNA replication forks via replication fork reversal (RFR). RuvA specifically binds to HJ cruciform DNA, conferring on it an open structure. The RuvB hexamer acts as an ATP-dependent pump, pulling dsDNA into and through the RuvAB complex. RuvB forms 2 homohexamers on either side of HJ DNA bound by 1 or 2 RuvA tetramers; 4 subunits per hexamer contact DNA at a time. Coordinated motions by a converter formed by DNA-disengaged RuvB subunits stimulates ATP hydrolysis and nucleotide exchange. Immobilization of the converter enables RuvB to convert the ATP-contained energy into a lever motion, pulling 2 nucleotides of DNA out of the RuvA tetramer per ATP hydrolyzed, thus driving DNA branch migration. The RuvB motors rotate together with the DNA substrate, which together with the progressing nucleotide cycle form the mechanistic basis for DNA recombination by continuous HJ branch migration. Branch migration allows RuvC to scan DNA until it finds its consensus sequence, where it cleaves and resolves cruciform DNA. This Clostridium acetobutylicum (strain ATCC 824 / DSM 792 / JCM 1419 / IAM 19013 / LMG 5710 / NBRC 13948 / NRRL B-527 / VKM B-1787 / 2291 / W) protein is Holliday junction branch migration complex subunit RuvB.